Reading from the N-terminus, the 632-residue chain is 1-deoxy-D-xylulose-5-phosphate synthase (632 aa).

Residues histidine 79 and 120-122 (GHA) contribute to the thiamine diphosphate site. Mg(2+) is bound at residue aspartate 152. Residues 153–154 (GS), asparagine 181, phenylalanine 293, and glutamate 377 each bind thiamine diphosphate. Asparagine 181 serves as a coordination point for Mg(2+).

It belongs to the transketolase family. DXPS subfamily. As to quaternary structure, homodimer. The cofactor is Mg(2+). Thiamine diphosphate is required as a cofactor.

It catalyses the reaction D-glyceraldehyde 3-phosphate + pyruvate + H(+) = 1-deoxy-D-xylulose 5-phosphate + CO2. Its pathway is metabolic intermediate biosynthesis; 1-deoxy-D-xylulose 5-phosphate biosynthesis; 1-deoxy-D-xylulose 5-phosphate from D-glyceraldehyde 3-phosphate and pyruvate: step 1/1. Functionally, catalyzes the acyloin condensation reaction between C atoms 2 and 3 of pyruvate and glyceraldehyde 3-phosphate to yield 1-deoxy-D-xylulose-5-phosphate (DXP). The protein is 1-deoxy-D-xylulose-5-phosphate synthase of Phocaeicola vulgatus (strain ATCC 8482 / DSM 1447 / JCM 5826 / CCUG 4940 / NBRC 14291 / NCTC 11154) (Bacteroides vulgatus).